A 245-amino-acid polypeptide reads, in one-letter code: Thiopurine S-methyltransferase (245 aa).

29-40 (WQEKWVSRRIGF) lines the S-adenosyl-L-methionine pocket. Phe40 is a substrate binding site. Lys58 bears the N6-acetyllysine mark. S-adenosyl-L-methionine-binding residues include Leu69, Glu90, and Arg152.

Belongs to the class I-like SAM-binding methyltransferase superfamily. TPMT family. Monomer.

The protein localises to the cytoplasm. The catalysed reaction is S-adenosyl-L-methionine + a thiopurine = S-adenosyl-L-homocysteine + a thiopurine S-methylether.. In Canis lupus familiaris (Dog), this protein is Thiopurine S-methyltransferase (TPMT).